The sequence spans 260 residues: Emerin (260 aa).

The residue at position 1 (Met-1) is an N-acetylmethionine. Residues 1-45 enclose the LEM domain; sequence MDDYAVLSDTELAAVLRQYNIPHGPILGSTRKLYEKKIFEYETQR. A phosphoserine mark is found at Ser-8 and Ser-29. Positions 46–224 are interaction with F-actin; the sequence is RRLSPPSSSS…PTAALGQDRQ (179 aa). Ser-49 is modified (phosphoserine; by PKA). Phosphoserine is present on residues Ser-54, Ser-69, Ser-72, Ser-88, Ser-99, Ser-142, Ser-143, and Ser-144. Residue Tyr-162 is modified to Phosphotyrosine. The tract at residues 169–188 is interaction with CTNNB1; sequence RPISNVSRSSLGLSYYPRSS. Residues Ser-172, Ser-175, and Ser-177 each carry the phosphoserine modification. The tract at residues 184–206 is disordered; that stretch reads YPRSSTSSVSSSSSSPSSWLTRR. A compositionally biased stretch (low complexity) spans 187 to 201; that stretch reads SSTSSVSSSSSSPSS. The chain crosses the membrane as a helical span at residues 225–245; sequence VPLWGQLLLFLAFATFLLFVY.

As to quaternary structure, interacts with lamins A and C, BANF1, GMCL, BCLAF1 and YTHDC1/YT521. Interacts with TMEM43; the interaction retains emerin in the inner nuclear membrane. Interacts with ACTB, SPTAN1, F-actin, CTNNB1 and beta-tubulin. Interacts with SUN1 and SUN2. Interacts with TMEM201. Interacts with NEMP1.

It localises to the nucleus inner membrane. Its subcellular location is the nucleus outer membrane. In terms of biological role, stabilizes and promotes the formation of a nuclear actin cortical network. Stimulates actin polymerization in vitro by binding and stabilizing the pointed end of growing filaments. Inhibits beta-catenin activity by preventing its accumulation in the nucleus. Acts by influencing the nuclear accumulation of beta-catenin through a CRM1-dependent export pathway. Links centrosomes to the nuclear envelope via a microtubule association. Required for proper localization of non-farnesylated prelamin-A/C. Together with NEMP1, contributes to nuclear envelope stiffness in germ cells. This chain is Emerin (Emd), found in Rattus norvegicus (Rat).